Reading from the N-terminus, the 158-residue chain is 6,7-dimethyl-8-ribityllumazine synthase (158 aa).

5-amino-6-(D-ribitylamino)uracil-binding positions include Trp27, 58 to 60, and 81 to 83; these read SFE and VII. Residue 86–87 participates in (2S)-2-hydroxy-3-oxobutyl phosphate binding; that stretch reads GT. His89 functions as the Proton donor in the catalytic mechanism. Phe114 contributes to the 5-amino-6-(D-ribitylamino)uracil binding site. Position 128 (Arg128) interacts with (2S)-2-hydroxy-3-oxobutyl phosphate.

It belongs to the DMRL synthase family.

It carries out the reaction (2S)-2-hydroxy-3-oxobutyl phosphate + 5-amino-6-(D-ribitylamino)uracil = 6,7-dimethyl-8-(1-D-ribityl)lumazine + phosphate + 2 H2O + H(+). The protein operates within cofactor biosynthesis; riboflavin biosynthesis; riboflavin from 2-hydroxy-3-oxobutyl phosphate and 5-amino-6-(D-ribitylamino)uracil: step 1/2. Functionally, catalyzes the formation of 6,7-dimethyl-8-ribityllumazine by condensation of 5-amino-6-(D-ribitylamino)uracil with 3,4-dihydroxy-2-butanone 4-phosphate. This is the penultimate step in the biosynthesis of riboflavin. In Leifsonia xyli subsp. xyli (strain CTCB07), this protein is 6,7-dimethyl-8-ribityllumazine synthase.